Consider the following 353-residue polypeptide: GTPase Obg (353 aa).

The region spanning M1 to I159 is the Obg domain. Residues A160–G327 enclose the OBG-type G domain. Residues G166 to S173, F191 to H195, D212 to G215, N279 to D282, and S308 to I310 contribute to the GTP site. The Mg(2+) site is built by S173 and T193. Residues S332 to A353 are disordered.

The protein belongs to the TRAFAC class OBG-HflX-like GTPase superfamily. OBG GTPase family. As to quaternary structure, monomer. It depends on Mg(2+) as a cofactor.

The protein localises to the cytoplasm. In terms of biological role, an essential GTPase which binds GTP, GDP and possibly (p)ppGpp with moderate affinity, with high nucleotide exchange rates and a fairly low GTP hydrolysis rate. Plays a role in control of the cell cycle, stress response, ribosome biogenesis and in those bacteria that undergo differentiation, in morphogenesis control. The chain is GTPase Obg from Rhodopseudomonas palustris (strain HaA2).